The primary structure comprises 456 residues: UPF0496 protein 4 (456 aa).

Residues 195–217 (VLMRALYGIESVTVFVCSIFVAV) traverse the membrane as a helical segment. Residues 368–390 (QDSNVKQANGSSDESALVVPERT) form a disordered region. Over residues 371–381 (NVKQANGSSDE) the composition is skewed to polar residues.

The protein belongs to the ROH1 family.

It localises to the membrane. In Oryza sativa subsp. japonica (Rice), this protein is UPF0496 protein 4.